The following is a 239-amino-acid chain: Fatty acid metabolism regulator protein (239 aa).

The HTH gntR-type domain maps to 6–74 (QSPAGFAEEY…HGKPTKVNNF (69 aa)). The H-T-H motif DNA-binding region spans 34-53 (ERELSELIGVTRTTLREVLQ).

As to quaternary structure, homodimer.

The protein resides in the cytoplasm. In terms of biological role, multifunctional regulator of fatty acid metabolism. The sequence is that of Fatty acid metabolism regulator protein from Yersinia pseudotuberculosis serotype O:1b (strain IP 31758).